Reading from the N-terminus, the 129-residue chain is Glycine cleavage system H protein (129 aa).

One can recognise a Lipoyl-binding domain in the interval 24-106 (SYTVGISEHA…YGDGWFFRIM (83 aa)). Position 65 is an N6-lipoyllysine (K65).

Belongs to the GcvH family. In terms of assembly, the glycine cleavage system is composed of four proteins: P, T, L and H. Requires (R)-lipoate as cofactor.

In terms of biological role, the glycine cleavage system catalyzes the degradation of glycine. The H protein shuttles the methylamine group of glycine from the P protein to the T protein. The sequence is that of Glycine cleavage system H protein from Shewanella loihica (strain ATCC BAA-1088 / PV-4).